The primary structure comprises 346 residues: UDP-3-O-acylglucosamine N-acyltransferase (346 aa).

The active-site Proton acceptor is H253.

This sequence belongs to the transferase hexapeptide repeat family. LpxD subfamily. As to quaternary structure, homotrimer.

The catalysed reaction is a UDP-3-O-[(3R)-3-hydroxyacyl]-alpha-D-glucosamine + a (3R)-hydroxyacyl-[ACP] = a UDP-2-N,3-O-bis[(3R)-3-hydroxyacyl]-alpha-D-glucosamine + holo-[ACP] + H(+). The protein operates within bacterial outer membrane biogenesis; LPS lipid A biosynthesis. Functionally, catalyzes the N-acylation of UDP-3-O-acylglucosamine using 3-hydroxyacyl-ACP as the acyl donor. Is involved in the biosynthesis of lipid A, a phosphorylated glycolipid that anchors the lipopolysaccharide to the outer membrane of the cell. The chain is UDP-3-O-acylglucosamine N-acyltransferase from Rickettsia conorii (strain ATCC VR-613 / Malish 7).